The primary structure comprises 754 residues: Phosphoribosylformylglycinamidine synthase subunit PurL (754 aa).

The disordered stretch occupies residues 1–21 (MLDTVEHAATTPDQPQPYGEL). The active site involves His54. ATP contacts are provided by Tyr57 and Lys101. Glu103 lines the Mg(2+) pocket. Substrate is bound by residues 104–107 (SHNH) and Arg126. Catalysis depends on His105, which acts as the Proton acceptor. Position 127 (Asp127) interacts with Mg(2+). Gln252 contributes to the substrate binding site. Asp280 contacts Mg(2+). A substrate-binding site is contributed by 324–326 (ESQ). 2 residues coordinate ATP: Asn512 and Gly549. A Mg(2+)-binding site is contributed by Asn550. Ser552 is a binding site for substrate.

The protein belongs to the FGAMS family. As to quaternary structure, monomer. Part of the FGAM synthase complex composed of 1 PurL, 1 PurQ and 2 PurS subunits.

The protein resides in the cytoplasm. The enzyme catalyses N(2)-formyl-N(1)-(5-phospho-beta-D-ribosyl)glycinamide + L-glutamine + ATP + H2O = 2-formamido-N(1)-(5-O-phospho-beta-D-ribosyl)acetamidine + L-glutamate + ADP + phosphate + H(+). Its pathway is purine metabolism; IMP biosynthesis via de novo pathway; 5-amino-1-(5-phospho-D-ribosyl)imidazole from N(2)-formyl-N(1)-(5-phospho-D-ribosyl)glycinamide: step 1/2. Part of the phosphoribosylformylglycinamidine synthase complex involved in the purines biosynthetic pathway. Catalyzes the ATP-dependent conversion of formylglycinamide ribonucleotide (FGAR) and glutamine to yield formylglycinamidine ribonucleotide (FGAM) and glutamate. The FGAM synthase complex is composed of three subunits. PurQ produces an ammonia molecule by converting glutamine to glutamate. PurL transfers the ammonia molecule to FGAR to form FGAM in an ATP-dependent manner. PurS interacts with PurQ and PurL and is thought to assist in the transfer of the ammonia molecule from PurQ to PurL. This chain is Phosphoribosylformylglycinamidine synthase subunit PurL, found in Mycobacterium bovis (strain ATCC BAA-935 / AF2122/97).